The primary structure comprises 484 residues: Putative myrosinase 6 (484 aa).

N28 carries an N-linked (GlcNAc...) asparagine glycan. A beta-D-glucoside is bound by residues Q39, H140, and 184–185 (NQ). Residues C204 and C207 are joined by a disulfide bond. A glycan (N-linked (GlcNAc...) asparagine) is linked at N260. A beta-D-glucoside is bound by residues Y321, W440, 447–448 (EF), and F456. N-linked (GlcNAc...) asparagine glycosylation is present at N462.

It belongs to the glycosyl hydrolase 1 family.

The catalysed reaction is a thioglucoside + H2O = a sugar + a thiol.. This Arabidopsis thaliana (Mouse-ear cress) protein is Putative myrosinase 6.